Here is a 128-residue protein sequence, read N- to C-terminus: Calcitonin gene-related peptide 1 (128 aa).

The first 25 residues, 1-25 (MGFLKFSPFLVVSILLLYQACSLQA), serve as a signal peptide directing secretion. Residues 26-80 (VPLRSILESSPGMATLSEEEVRLLAALVQDYMQMKARELEQEEEQEAEGSSVTAQ) constitute a propeptide that is removed on maturation. Cys-84 and Cys-89 are joined by a disulfide. Phe-119 bears the Phenylalanine amide mark. Positions 125–128 (DLQA) are excised as a propeptide.

The protein belongs to the calcitonin family. As to expression, detected in nerve cells of cerebrum, hippocampus and pons/midbrain in newborns, and only in nerve cells of pons/midbrain in adult.

The protein localises to the secreted. CGRP1/CALCA is a peptide hormone that induces vasodilation mediated by the CALCRL-RAMP1 receptor complex. Dilates a variety of vessels including the coronary, cerebral and systemic vasculature. Its abundance in the CNS also points toward a neurotransmitter or neuromodulator role. It also elevates platelet cAMP. CGRP1 can also bind and activate CALCR-RAMP1 (AMYR1) receptor complex. The polypeptide is Calcitonin gene-related peptide 1 (Mus musculus (Mouse)).